The following is a 235-amino-acid chain: 5'-methylthioadenosine/S-adenosylhomocysteine nucleosidase (235 aa).

Glu12 serves as the catalytic Proton acceptor. Residues Gly78, Ile152, and 173–174 (ME) contribute to the substrate site. The active-site Proton donor is Asp197.

This sequence belongs to the PNP/UDP phosphorylase family. MtnN subfamily. In terms of assembly, homodimer.

It carries out the reaction S-adenosyl-L-homocysteine + H2O = S-(5-deoxy-D-ribos-5-yl)-L-homocysteine + adenine. The catalysed reaction is S-methyl-5'-thioadenosine + H2O = 5-(methylsulfanyl)-D-ribose + adenine. The enzyme catalyses 5'-deoxyadenosine + H2O = 5-deoxy-D-ribose + adenine. The protein operates within amino-acid biosynthesis; L-methionine biosynthesis via salvage pathway; S-methyl-5-thio-alpha-D-ribose 1-phosphate from S-methyl-5'-thioadenosine (hydrolase route): step 1/2. In terms of biological role, catalyzes the irreversible cleavage of the glycosidic bond in both 5'-methylthioadenosine (MTA) and S-adenosylhomocysteine (SAH/AdoHcy) to adenine and the corresponding thioribose, 5'-methylthioribose and S-ribosylhomocysteine, respectively. Also cleaves 5'-deoxyadenosine, a toxic by-product of radical S-adenosylmethionine (SAM) enzymes, into 5-deoxyribose and adenine. Thus, is required for in vivo function of the radical SAM enzymes biotin synthase and lipoic acid synthase, that are inhibited by 5'-deoxyadenosine accumulation. This is 5'-methylthioadenosine/S-adenosylhomocysteine nucleosidase from Buchnera aphidicola subsp. Schizaphis graminum (strain Sg).